Consider the following 65-residue polypeptide: UPF0434 protein RPB_0294 (65 aa).

It belongs to the UPF0434 family.

The polypeptide is UPF0434 protein RPB_0294 (Rhodopseudomonas palustris (strain HaA2)).